Consider the following 299-residue polypeptide: Putative glycylpeptide N-tetradecanoyltransferase (299 aa).

Belongs to the NMT family.

The enzyme catalyses N-terminal glycyl-[protein] + tetradecanoyl-CoA = N-tetradecanoylglycyl-[protein] + CoA + H(+). Its function is as follows. Adds a myristoyl group to the N-terminal glycine residue of certain proteins. This is Putative glycylpeptide N-tetradecanoyltransferase from Amsacta moorei entomopoxvirus (AmEPV).